The primary structure comprises 219 residues: Ribonuclease HII (219 aa).

The RNase H type-2 domain occupies Gly22 to Val219. Positions 28, 29, and 125 each coordinate a divalent metal cation.

Belongs to the RNase HII family. The cofactor is Mn(2+). Mg(2+) serves as cofactor.

It is found in the cytoplasm. The catalysed reaction is Endonucleolytic cleavage to 5'-phosphomonoester.. Endonuclease that specifically degrades the RNA of RNA-DNA hybrids. The protein is Ribonuclease HII of Granulibacter bethesdensis (strain ATCC BAA-1260 / CGDNIH1).